The primary structure comprises 853 residues: uncharacterized protein (853 aa).

Over residues 1 to 11 the composition is skewed to basic residues; it reads MAPRKKAVTKK. 3 disordered regions span residues 1 to 448, 485 to 621, and 635 to 658; these read MAPR…SNNV, IAPT…NYFN, and ENYK…NEDE. A compositionally biased stretch (acidic residues) spans 20 to 37; sequence IEEEIIEEPVDEIVESDG. Residues 42–55 show a composition bias toward basic residues; it reads NKKKGKRKSSKKSK. The segment covering 60–74 has biased composition (acidic residues); sequence ENVEEEEQDQEEEEE. Residues 75 to 87 show a composition bias toward basic and acidic residues; sequence GNKKQKEENDADK. The segment covering 88-107 has biased composition (basic residues); sequence KSRKHDEHRKKRDSKNRRSH. The segment covering 112–121 has biased composition (acidic residues); sequence ENEEGEEDDE. The segment covering 124–139 has biased composition (basic residues); it reads RKKRRRRKHREKRKKN. 2 stretches are compositionally biased toward acidic residues: residues 143 to 166 and 179 to 197; these read EEEE…EEDV and DFDE…EEEQ. Basic residues predominate over residues 216–228; that stretch reads DKSKKRKSKKKKR. 2 stretches are compositionally biased toward acidic residues: residues 232–260 and 268–286; these read DDDD…EDVN and KEEE…DEEK. Composition is skewed to basic and acidic residues over residues 287-361, 370-400, and 411-425; these read QSEN…RDHY, SRDH…RDHY, and RSRD…DEKS. Low complexity-rich tracts occupy residues 426-447, 510-613, and 636-652; these read SSSN…SSNN, NNDN…SNSS, and NYKN…NNNK.

This is an uncharacterized protein from Dictyostelium discoideum (Social amoeba).